We begin with the raw amino-acid sequence, 195 residues long: Imidazoleglycerol-phosphate dehydratase (195 aa).

This sequence belongs to the imidazoleglycerol-phosphate dehydratase family.

The protein resides in the cytoplasm. It carries out the reaction D-erythro-1-(imidazol-4-yl)glycerol 3-phosphate = 3-(imidazol-4-yl)-2-oxopropyl phosphate + H2O. The protein operates within amino-acid biosynthesis; L-histidine biosynthesis; L-histidine from 5-phospho-alpha-D-ribose 1-diphosphate: step 6/9. In Burkholderia lata (strain ATCC 17760 / DSM 23089 / LMG 22485 / NCIMB 9086 / R18194 / 383), this protein is Imidazoleglycerol-phosphate dehydratase.